The sequence spans 60 residues: SCLLLQFTDKRFQPVHDLTIGVEFGARGAAGALLVYDITRRTASNVEEAFINTAKEIYEK.

Ser1, Cys2, and Thr19 together coordinate GTP. Ser1 serves as a coordination point for Mg(2+). Residues His16–Phe24 carry the Effector region motif. Thr19 contacts Mg(2+).

The protein belongs to the small GTPase superfamily. Rab family. Interacts with PRKCI. Interacts with TRIP11. Interacts (in GTP-bound form) with GARIN1B. Interacts (GTP-bound) with HOPS complex component VPS39; interaction contributes to obtaining a functional HOPS complex that promotes autophagosome-lysosome membrane fusion driven by STX17-SNAP29-VAMP8. May interact with VPS41. It depends on Mg(2+) as a cofactor. Post-translationally, prenylated. Prenylation is required for association with cellular membranes.

It localises to the endoplasmic reticulum-Golgi intermediate compartment membrane. Its subcellular location is the melanosome. The protein localises to the endoplasmic reticulum membrane. It is found in the golgi apparatus membrane. The protein resides in the cytoplasmic vesicle. It localises to the secretory vesicle. Its subcellular location is the acrosome. The protein localises to the autophagosome membrane. It catalyses the reaction GTP + H2O = GDP + phosphate + H(+). With respect to regulation, regulated by guanine nucleotide exchange factors (GEFs) which promote the exchange of bound GDP for free GTP, GTPase activating proteins (GAPs) which increase the GTP hydrolysis activity, and GDP dissociation inhibitors (GDIs) which inhibit the dissociation of the nucleotide from the GTPase. In terms of biological role, the small GTPases Rab are key regulators of intracellular membrane trafficking, from the formation of transport vesicles to their fusion with membranes. Rabs cycle between active GTP-bound and inactive GDP-bound states. In their active state, drive transport of vesicular carriers from donor organelles to acceptor organelles to regulate the membrane traffic that maintains organelle identity and morphology. RAB2A regulates autophagy by promoting autophagosome-lysosome fusion via recruitment of the HOPS endosomal tethering complex; this process involves autophagosomal RAB2A and lysosomal RAB39A recruitment of HOPS subcomplexes VPS39-VPS11 and VPS41-VPS16-VPS18-VPS33A, respectively, which assemble into a functional complex to mediate membrane tethering and SNAREs-driven membrane fusion. Required for protein transport from the endoplasmic reticulum to the Golgi complex. Regulates the compacted morphology of the Golgi. Together with RAB2B, redundantly required for efficient autophagic flux. This is Ras-related protein Rab-2A from Mesocricetus auratus (Golden hamster).